We begin with the raw amino-acid sequence, 115 residues long: Phosphoribosyl-AMP cyclohydrolase (115 aa).

Position 80 (Asp80) interacts with Mg(2+). Cys81 is a binding site for Zn(2+). Mg(2+) is bound by residues Asp82 and Asp84. The Zn(2+) site is built by Cys97 and Cys104.

This sequence belongs to the PRA-CH family. In terms of assembly, homodimer. Mg(2+) is required as a cofactor. It depends on Zn(2+) as a cofactor.

The protein resides in the cytoplasm. It carries out the reaction 1-(5-phospho-beta-D-ribosyl)-5'-AMP + H2O = 1-(5-phospho-beta-D-ribosyl)-5-[(5-phospho-beta-D-ribosylamino)methylideneamino]imidazole-4-carboxamide. The protein operates within amino-acid biosynthesis; L-histidine biosynthesis; L-histidine from 5-phospho-alpha-D-ribose 1-diphosphate: step 3/9. Its function is as follows. Catalyzes the hydrolysis of the adenine ring of phosphoribosyl-AMP. The protein is Phosphoribosyl-AMP cyclohydrolase of Nocardia farcinica (strain IFM 10152).